Reading from the N-terminus, the 451-residue chain is Tubby-like F-box protein 12 (451 aa).

The 56-residue stretch at 57 to 112 (SRWVGLPPELLRDVMKRLEEGESNWPSRKDVVACAAVCRTWREICKDIVQSPEICG) folds into the F-box domain. Over residues 387-406 (LEQQQQQQQQNHASSSSSAS) the composition is skewed to low complexity. The disordered stretch occupies residues 387 to 407 (LEQQQQQQQQNHASSSSSASD).

This sequence belongs to the TUB family. Ubiquitous.

In Oryza sativa subsp. japonica (Rice), this protein is Tubby-like F-box protein 12 (TULP12).